A 592-amino-acid chain; its full sequence is Frizzled-1 (592 aa).

Residues 1–26 (MAERRGPAGGGSGEVGGGRRAGGDRC) are disordered. Residues 1 to 48 (MAERRGPAGGGSGEVGGGRRAGGDRCPRRPPALPLLLLLWAAALPAGG) form the signal peptide. Positions 7–20 (PAGGGSGEVGGGRR) are enriched in gly residues. Over 49–271 (QPAAQPAALS…PEELRFSRTW (223 aa)) the chain is Extracellular. In terms of domain architecture, FZ spans 65 to 184 (PDHGYCQPIS…HGAGELCVGQ (120 aa)). 5 disulfide bridges follow: cysteine 70–cysteine 131, cysteine 78–cysteine 124, cysteine 115–cysteine 152, cysteine 141–cysteine 181, and cysteine 145–cysteine 169. A glycan (N-linked (GlcNAc...) asparagine) is linked at asparagine 84. Asparagine 185 is a glycosylation site (N-linked (GlcNAc...) asparagine). Residues 185–219 (NASERGTPTPALRPESWTSNPHRGGGAGGSGPGEA) form a disordered region. The span at 207-218 (RGGGAGGSGPGE) shows a compositional bias: gly residues. A helical transmembrane segment spans residues 272 to 292 (IGIWSVLCCASTLFTVLTYLV). The Cytoplasmic portion of the chain corresponds to 293–303 (DMKRFSYPERP). The helical transmembrane segment at 304–324 (IIFLSGCYTAVAVAYIAGFLL) threads the bilayer. Topologically, residues 325–351 (EERVVCNERFAEDGSRTVAQGTKREGC) are extracellular. A helical transmembrane segment spans residues 352 to 372 (TILFMMLYFFGMASSIWWVIL). The Cytoplasmic portion of the chain corresponds to 373 to 394 (SLTWFLAAGMKWGHEAIEANSQ). Residues 395-415 (YFHLAAWAVPAIKTITILALG) form a helical membrane-spanning segment. Over 416-438 (QVDGDVLSGVCFVGINNVDALRG) the chain is Extracellular. A helical transmembrane segment spans residues 439–459 (FVLAPLFVYLFIGTSFLLAGF). Topologically, residues 460 to 485 (VSLFRIRTIMKHDGTKTEKLEKLMVR) are cytoplasmic. A helical transmembrane segment spans residues 486 to 506 (IGIFSVLYTVPATIVIACYFY). Residues 507-546 (EQAFREQWERSWVTQSCKSYAIPCPNNHSSHHPPMSPDFT) are Extracellular-facing. Residue asparagine 533 is glycosylated (N-linked (GlcNAc...) asparagine). A helical transmembrane segment spans residues 547–567 (VFMIKYLMTLIVGITSGFWIW). Residues 568 to 592 (SGKTLNSWRKFYTRLTNSKQGETTV) lie on the Cytoplasmic side of the membrane. The short motif at 570–575 (KTLNSW) is the Lys-Thr-X-X-X-Trp motif, mediates interaction with the PDZ domain of Dvl family members element. The short motif at 590–592 (TTV) is the PDZ-binding element.

It belongs to the G-protein coupled receptor Fz/Smo family. In terms of tissue distribution, expressed in the lens, otic placode (medial wall of the vesicle) and in epibranchial placode. Also expressed in the developing somites (dermomyotome).

It is found in the cell membrane. Receptor for Wnt proteins. Functions in the canonical Wnt/beta-catenin signaling pathway. The canonical Wnt/beta-catenin signaling pathway leads to the activation of disheveled proteins, inhibition of GSK-3 kinase, nuclear accumulation of beta-catenin and activation of Wnt target genes. A second signaling pathway involving PKC and calcium fluxes has been seen for some family members, but it is not yet clear if it represents a distinct pathway or if it can be integrated in the canonical pathway, as PKC seems to be required for Wnt-mediated inactivation of GSK-3 kinase. Both pathways seem to involve interactions with G-proteins. May be involved in transduction and intercellular transmission of polarity information during tissue morphogenesis and/or in differentiated tissues. In Gallus gallus (Chicken), this protein is Frizzled-1 (FZD1).